Here is a 313-residue protein sequence, read N- to C-terminus: Beta-lactamase (313 aa).

Residues 1–15 (MQRIGVTDYTILGTV) form the signal peptide. The active-site Acyl-ester intermediate is the serine 190.

It belongs to the class-C beta-lactamase family.

The catalysed reaction is a beta-lactam + H2O = a substituted beta-amino acid. Functionally, upon expression in E.coli enables the latter to utilize penicillin as a carbon source. The sequence is that of Beta-lactamase (penA) from Burkholderia multivorans (strain ATCC 17616 / 249).